Here is a 227-residue protein sequence, read N- to C-terminus: 7-cyano-7-deazaguanine synthase (227 aa).

16–26 (FSGGQDSTTCL) lines the ATP pocket. Zn(2+) is bound by residues Cys194, Cys202, Cys205, and Cys208.

It belongs to the QueC family. Zn(2+) serves as cofactor.

It catalyses the reaction 7-carboxy-7-deazaguanine + NH4(+) + ATP = 7-cyano-7-deazaguanine + ADP + phosphate + H2O + H(+). It participates in purine metabolism; 7-cyano-7-deazaguanine biosynthesis. In terms of biological role, catalyzes the ATP-dependent conversion of 7-carboxy-7-deazaguanine (CDG) to 7-cyano-7-deazaguanine (preQ(0)). The sequence is that of 7-cyano-7-deazaguanine synthase from Haemophilus influenzae (strain PittEE).